The primary structure comprises 168 residues: Calcium-binding protein 2 (168 aa).

4 EF-hand domains span residues 13 to 48 (GMEKDLESLFKKYDSDRNGKITYIEIVETLRKAGKK), 48 to 83 (KNPERIADLLFRDDTDKNGELTIEEAKLRIVRMNDE), 88 to 123 (VLNWDVEKFINDNDKDGDRKITRDEVLQRFTEQGAE), and 124 to 159 (DPELITDSIFRQMDLDRDGVITCDEIKEFNRKKKFS). Asp-26, Asp-28, Asn-30, Lys-32, Glu-37, Asp-61, Asp-63, Asn-65, Glu-67, Glu-72, Asp-101, Asp-103, Asp-105, Lys-107, Glu-112, Asp-137, Asp-139, Asp-141, and Glu-148 together coordinate Ca(2+).

Functionally, not known; probably binds four calcium ions. This Dictyostelium discoideum (Social amoeba) protein is Calcium-binding protein 2 (cbp2).